The following is a 631-amino-acid chain: ATP-dependent zinc metalloprotease FtsH (631 aa).

Residues 1–2 (MK) lie on the Stromal side of the membrane. The chain crosses the membrane as a helical span at residues 3-23 (ISWKNILLTLIPLGLISFLVW). The Lumenal portion of the chain corresponds to 24-118 (QGFNNTTNPQ…AHATNDSTPA (95 aa)). The chain crosses the membrane as a helical span at residues 119–139 (WSLIGNLIFPILLIAGLAFLF). Residues 140–631 (RRSSNLPGGP…IDYKSQLKST (492 aa)) lie on the Stromal side of the membrane. ATP is bound at residue 213–220 (GPPGTGKT). Zn(2+) is bound at residue His434. Glu435 is an active-site residue. Residues His438 and Asp512 each coordinate Zn(2+).

The protein in the central section; belongs to the AAA ATPase family. It in the C-terminal section; belongs to the peptidase M41 family. In terms of assembly, homohexamer. Requires Zn(2+) as cofactor.

The protein resides in the plastid. Its subcellular location is the chloroplast thylakoid membrane. Functionally, acts as a processive, ATP-dependent zinc metallopeptidase. This chain is ATP-dependent zinc metalloprotease FtsH, found in Guillardia theta (Cryptophyte).